The primary structure comprises 466 residues: Adenosylhomocysteinase (466 aa).

Positions 57, 132, and 192 each coordinate substrate. NAD(+) is bound at residue 193-195; the sequence is TTT. Residues Lys222 and Asp226 each contribute to the substrate site. Residues Asn227, 256–261, Glu279, Asn314, 335–337, and Asn380 contribute to the NAD(+) site; these read GYGDVG and IGH.

Belongs to the adenosylhomocysteinase family. Requires NAD(+) as cofactor.

It is found in the cytoplasm. It carries out the reaction S-adenosyl-L-homocysteine + H2O = L-homocysteine + adenosine. It functions in the pathway amino-acid biosynthesis; L-homocysteine biosynthesis; L-homocysteine from S-adenosyl-L-homocysteine: step 1/1. In terms of biological role, may play a key role in the regulation of the intracellular concentration of adenosylhomocysteine. The chain is Adenosylhomocysteinase from Sinorhizobium medicae (strain WSM419) (Ensifer medicae).